The chain runs to 403 residues: MSKFNRIHLVVLDSVGIGAAPDANNFVNAGVPDGASDTLGHISKTVGLNVPNMAKIGLGNIPRETPLKTVAAESNPTGYATKLEEVSLGKDTMTGHWEIMGLNITEPFDTFWNGFPEEILTKIEEFSGRKVIRETNKPYSGTAVIYDFGPRQMETGELIIYTSADPVLQIAAHEDIIPLDELYRICEYARSITLERPALLGRIIARPYVGEPGNFTRTANRRDLAVSPFSPTVLDKLNEAGIDTYAVGKINDIFNGAGINHDMGHNKSNSHGIDTLLKTMGLAEFEKGFSFTNLVDFDALYGHRRNAHGYRDCLHEFDERLPEIIAAMRENDLLLITADHGNDPTYAGTDHTREYIPLLAYSPAFKGNGLIPVGHFADISATVADNFGVETAMIGESFLDKLV.

Mn(2+) is bound by residues aspartate 13, aspartate 298, histidine 303, aspartate 339, histidine 340, and histidine 351.

This sequence belongs to the phosphopentomutase family. Mn(2+) serves as cofactor.

It is found in the cytoplasm. It carries out the reaction 2-deoxy-alpha-D-ribose 1-phosphate = 2-deoxy-D-ribose 5-phosphate. The enzyme catalyses alpha-D-ribose 1-phosphate = D-ribose 5-phosphate. It participates in carbohydrate degradation; 2-deoxy-D-ribose 1-phosphate degradation; D-glyceraldehyde 3-phosphate and acetaldehyde from 2-deoxy-alpha-D-ribose 1-phosphate: step 1/2. Functionally, isomerase that catalyzes the conversion of deoxy-ribose 1-phosphate (dRib-1-P) and ribose 1-phosphate (Rib-1-P) to deoxy-ribose 5-phosphate (dRib-5-P) and ribose 5-phosphate (Rib-5-P), respectively. The protein is Phosphopentomutase of Streptococcus pneumoniae serotype 2 (strain D39 / NCTC 7466).